Reading from the N-terminus, the 318-residue chain is Malate dehydrogenase (318 aa).

NAD(+) contacts are provided by residues 10–15 (GGGQIG) and Asp34. Residues Arg83 and Arg89 each contribute to the substrate site. Residues Asn96 and 119–121 (ISN) each bind NAD(+). Substrate is bound by residues Asn121 and Arg152. His176 functions as the Proton acceptor in the catalytic mechanism.

The protein belongs to the LDH/MDH superfamily. MDH type 3 family.

It carries out the reaction (S)-malate + NAD(+) = oxaloacetate + NADH + H(+). Functionally, catalyzes the reversible oxidation of malate to oxaloacetate. This Geotalea uraniireducens (strain Rf4) (Geobacter uraniireducens) protein is Malate dehydrogenase.